Reading from the N-terminus, the 262-residue chain is Type III pantothenate kinase (262 aa).

9 to 16 (DAGNSRIK) is a binding site for ATP. Residues Tyr-96 and 103–106 (GSDR) each bind substrate. The Proton acceptor role is filled by Asp-105. ATP is bound at residue Thr-129. Thr-189 is a substrate binding site.

Belongs to the type III pantothenate kinase family. As to quaternary structure, homodimer. Requires NH4(+) as cofactor. K(+) serves as cofactor.

The protein resides in the cytoplasm. It catalyses the reaction (R)-pantothenate + ATP = (R)-4'-phosphopantothenate + ADP + H(+). It participates in cofactor biosynthesis; coenzyme A biosynthesis; CoA from (R)-pantothenate: step 1/5. Catalyzes the phosphorylation of pantothenate (Pan), the first step in CoA biosynthesis. This chain is Type III pantothenate kinase, found in Burkholderia ambifaria (strain MC40-6).